The following is a 122-amino-acid chain: MIQMQTRLDVADNSGARQVQCIKVLGGSKRMIAGVGDIIVVSVKEAIPRGRVKKGDVHRAVIVRTAKEIRRPDGTSIRFDRNAAVLLNKQNEPIGTRIFGPVVRELRARKFMKIISLAPEVL.

The protein belongs to the universal ribosomal protein uL14 family. Part of the 50S ribosomal subunit. Forms a cluster with proteins L3 and L19. In the 70S ribosome, L14 and L19 interact and together make contacts with the 16S rRNA in bridges B5 and B8.

Functionally, binds to 23S rRNA. Forms part of two intersubunit bridges in the 70S ribosome. This chain is Large ribosomal subunit protein uL14, found in Rhodospirillum rubrum (strain ATCC 11170 / ATH 1.1.1 / DSM 467 / LMG 4362 / NCIMB 8255 / S1).